The primary structure comprises 594 residues: ATP-dependent RNA helicase DBP9 (594 aa).

The Q motif motif lies at 15–43; the sequence is SSFDSFHLDSRLSQAIRSIGFKHPTLIQS. Residues 47–229 form the Helicase ATP-binding domain; it reads PLALQEKRDI…QQFCRSPAIL (183 aa). An ATP-binding site is contributed by 60–67; the sequence is ASTGSGKT. Residues 175–178 carry the DEAD box motif; that stretch reads DEVD. The region spanning 242 to 474 is the Helicase C-terminal domain; sequence KLIQYYVKVG…PYNFDIKQVE (233 aa). A disordered region spans residues 562–594; that stretch reads PFHKNSHRKNGRVVKKKGNVQRKGKSDPLKSFK. The segment covering 565-584 has biased composition (basic residues); the sequence is KNSHRKNGRVVKKKGNVQRK. The span at 585–594 shows a compositional bias: basic and acidic residues; the sequence is GKSDPLKSFK.

Belongs to the DEAD box helicase family. DDX56/DBP9 subfamily.

It localises to the nucleus. The protein localises to the nucleolus. It catalyses the reaction ATP + H2O = ADP + phosphate + H(+). ATP-binding RNA helicase involved in the biogenesis of 60S ribosomal subunits and is required for the normal formation of 25S and 5.8S rRNAs. This is ATP-dependent RNA helicase DBP9 (DBP9) from Kluyveromyces lactis (strain ATCC 8585 / CBS 2359 / DSM 70799 / NBRC 1267 / NRRL Y-1140 / WM37) (Yeast).